The sequence spans 327 residues: Deaminated glutathione amidase (327 aa).

The transit peptide at 1–13 directs the protein to the mitochondrion; sequence MLGFITRPPHRFL. Residues 46 to 298 form the CN hydrolase domain; sequence LPLVAVCQVT…PGLCLARIDL (253 aa). Catalysis depends on glutamate 86, which acts as the Proton acceptor. The active-site Proton donor is lysine 161. Cysteine 203 acts as the Nucleophile in catalysis.

It belongs to the carbon-nitrogen hydrolase superfamily. NIT1/NIT2 family. As to expression, detected in heart, brain, placenta, liver, skeletal muscle, kidney and pancreas.

The protein localises to the mitochondrion. The protein resides in the cytoplasm. The catalysed reaction is N-(4-oxoglutaryl)-L-cysteinylglycine + H2O = L-cysteinylglycine + 2-oxoglutarate. Its function is as follows. Catalyzes the hydrolysis of the amide bond in N-(4-oxoglutarate)-L-cysteinylglycine (deaminated glutathione), a metabolite repair reaction to dispose of the harmful deaminated glutathione. Plays a role in cell growth and apoptosis: loss of expression promotes cell growth, resistance to DNA damage stress and increased incidence to NMBA-induced tumors. Has tumor suppressor properties that enhances the apoptotic responsiveness in cancer cells; this effect is additive to the tumor suppressor activity of FHIT. It is also a negative regulator of primary T-cells. The polypeptide is Deaminated glutathione amidase (NIT1) (Homo sapiens (Human)).